Here is a 271-residue protein sequence, read N- to C-terminus: Thiazole synthase (271 aa).

K95 functions as the Schiff-base intermediate with DXP in the catalytic mechanism. 1-deoxy-D-xylulose 5-phosphate contacts are provided by residues G156, 182 to 183 (AG), and 204 to 205 (NT).

It belongs to the ThiG family. Homotetramer. Forms heterodimers with either ThiH or ThiS.

The protein localises to the cytoplasm. It catalyses the reaction [ThiS sulfur-carrier protein]-C-terminal-Gly-aminoethanethioate + 2-iminoacetate + 1-deoxy-D-xylulose 5-phosphate = [ThiS sulfur-carrier protein]-C-terminal Gly-Gly + 2-[(2R,5Z)-2-carboxy-4-methylthiazol-5(2H)-ylidene]ethyl phosphate + 2 H2O + H(+). Its pathway is cofactor biosynthesis; thiamine diphosphate biosynthesis. Functionally, catalyzes the rearrangement of 1-deoxy-D-xylulose 5-phosphate (DXP) to produce the thiazole phosphate moiety of thiamine. Sulfur is provided by the thiocarboxylate moiety of the carrier protein ThiS. In vitro, sulfur can be provided by H(2)S. This chain is Thiazole synthase, found in Yersinia pseudotuberculosis serotype O:1b (strain IP 31758).